The sequence spans 59 residues: Large ribosomal subunit protein uL30 (59 aa).

The protein belongs to the universal ribosomal protein uL30 family. In terms of assembly, part of the 50S ribosomal subunit.

This chain is Large ribosomal subunit protein uL30, found in Bacillus licheniformis (strain ATCC 14580 / DSM 13 / JCM 2505 / CCUG 7422 / NBRC 12200 / NCIMB 9375 / NCTC 10341 / NRRL NRS-1264 / Gibson 46).